Consider the following 282-residue polypeptide: Dihydropteroate synthase (282 aa).

Residues 15-267 form the Pterin-binding domain; the sequence is PHVMGILNVT…DVKETVEAMR (253 aa). Residue N22 coordinates Mg(2+). (7,8-dihydropterin-6-yl)methyl diphosphate-binding positions include T62, D96, N115, D185, K221, and 255 to 257; that span reads RVH.

This sequence belongs to the DHPS family. Homodimer. The cofactor is Mg(2+).

It catalyses the reaction (7,8-dihydropterin-6-yl)methyl diphosphate + 4-aminobenzoate = 7,8-dihydropteroate + diphosphate. The protein operates within cofactor biosynthesis; tetrahydrofolate biosynthesis; 7,8-dihydrofolate from 2-amino-4-hydroxy-6-hydroxymethyl-7,8-dihydropteridine diphosphate and 4-aminobenzoate: step 1/2. Its function is as follows. Catalyzes the condensation of para-aminobenzoate (pABA) with 6-hydroxymethyl-7,8-dihydropterin diphosphate (DHPt-PP) to form 7,8-dihydropteroate (H2Pte), the immediate precursor of folate derivatives. The sequence is that of Dihydropteroate synthase (folP) from Shigella flexneri.